The following is a 461-amino-acid chain: Transcriptional activator RocR (461 aa).

Asp-57 is subject to 4-aspartylphosphate. The Sigma-54 factor interaction domain maps to 143–372; that stretch reads ILGTSPAIQD…EHMIEGAMNF (230 aa). ATP contacts are provided by residues 171–178 and 233–242; these read GETGTGKE and AHGGTLLLDE. Residues 434–453 constitute a DNA-binding region (H-T-H motif); sequence ISKAAQELGISRQSLQYRLK.

Positive regulator of arginine catabolism. Controls the transcription of the two operons rocABC and rocDEF and probably acts by binding to the corresponding upstream activating sequences. This Bacillus subtilis (strain 168) protein is Transcriptional activator RocR (rocR).